The sequence spans 2291 residues: Spectrin beta chain (2291 aa).

The interval methionine 1–histidine 271 is actin-binding. Calponin-homology (CH) domains are found at residues serine 50 to glutamine 154 and lysine 169 to serine 274. 17 Spectrin repeats span residues valine 300–glutamate 408, alanine 420–glutamate 521, glutamine 525–glutamate 633, lysine 636–asparagine 739, tyrosine 743–leucine 843, leucine 848–leucine 948, valine 954–glutamate 1057, aspartate 1060–serine 1166, aspartate 1170–lysine 1272, lysine 1276–leucine 1376, glutamine 1386–glutamate 1484, glutamate 1488–glutamate 1591, lysine 1594–glutamate 1697, leucine 1701–leucine 1802, glutamate 1807–alanine 1909, aspartate 1913–glutamine 2015, and valine 2020–lysine 2089. Basic and acidic residues predominate over residues glutamate 2097–arginine 2140. Residues glutamate 2097–glycine 2152 are disordered. Positions glycine 2147–aspartate 2259 constitute a PH domain. Serine 2195 carries the post-translational modification Phosphoserine. The span at alanine 2262 to serine 2275 shows a compositional bias: polar residues. Residues alanine 2262–lysine 2291 are disordered.

The protein belongs to the spectrin family. Native spectrin molecule is a tetramer composed of two antiparallel heterodimers joined head to head so that each end of the native molecule includes the C-terminus of the alpha subunit and the N-terminus of the beta subunit.

The protein localises to the cytoplasm. It localises to the cytoskeleton. The protein resides in the cell cortex. Functionally, spectrin is the major constituent of the cytoskeletal network underlying the erythrocyte plasma membrane. It associates with band 4.1 and actin to form the cytoskeletal superstructure of the erythrocyte plasma membrane. Interacts with calmodulin in a calcium-dependent manner. In Drosophila melanogaster (Fruit fly), this protein is Spectrin beta chain (beta-Spec).